Reading from the N-terminus, the 296-residue chain is ADP-dependent (S)-NAD(P)H-hydrate dehydratase (296 aa).

Positions 18–292 (TALRFPHVFK…PAARWLRNRI (275 aa)) constitute a YjeF C-terminal domain. (6S)-NADPHX is bound by residues alanine 53, glycine 113, and histidine 165. AMP is bound by residues 202 to 206 (KGHKT) and glycine 231. Aspartate 232 contributes to the (6S)-NADPHX binding site.

It belongs to the NnrD/CARKD family. In terms of assembly, homotetramer. Mg(2+) serves as cofactor.

It carries out the reaction (6S)-NADHX + ADP = AMP + phosphate + NADH + H(+). The catalysed reaction is (6S)-NADPHX + ADP = AMP + phosphate + NADPH + H(+). Catalyzes the dehydration of the S-form of NAD(P)HX at the expense of ADP, which is converted to AMP. Together with NAD(P)HX epimerase, which catalyzes the epimerization of the S- and R-forms, the enzyme allows the repair of both epimers of NAD(P)HX, a damaged form of NAD(P)H that is a result of enzymatic or heat-dependent hydration. The protein is ADP-dependent (S)-NAD(P)H-hydrate dehydratase of Neisseria meningitidis serogroup B (strain ATCC BAA-335 / MC58).